A 257-amino-acid polypeptide reads, in one-letter code: Ribosomal RNA small subunit methyltransferase A (257 aa).

His-12, Leu-14, Gly-39, Glu-60, Asp-83, and Asn-101 together coordinate S-adenosyl-L-methionine.

Belongs to the class I-like SAM-binding methyltransferase superfamily. rRNA adenine N(6)-methyltransferase family. RsmA subfamily.

The protein localises to the cytoplasm. It carries out the reaction adenosine(1518)/adenosine(1519) in 16S rRNA + 4 S-adenosyl-L-methionine = N(6)-dimethyladenosine(1518)/N(6)-dimethyladenosine(1519) in 16S rRNA + 4 S-adenosyl-L-homocysteine + 4 H(+). Specifically dimethylates two adjacent adenosines (A1518 and A1519) in the loop of a conserved hairpin near the 3'-end of 16S rRNA in the 30S particle. May play a critical role in biogenesis of 30S subunits. The chain is Ribosomal RNA small subunit methyltransferase A from Nitrosomonas europaea (strain ATCC 19718 / CIP 103999 / KCTC 2705 / NBRC 14298).